The primary structure comprises 393 residues: Bifunctional enzyme Fae/Hps (393 aa).

Residues 1–161 (MYLVGEALIG…YEKDRAAHGI (161 aa)) form a formaldehyde-activating enzyme region. H17 functions as the Proton donor in the catalytic mechanism. Substrate is bound by residues D19, L48, K66, T68, and Q83. The interval 162–393 (MGFKVQRLWD…IDQFRIMTDF (232 aa)) is 3-hexulose-6-phosphate synthase.

In the N-terminal section; belongs to the formaldehyde-activating enzyme family. This sequence in the C-terminal section; belongs to the HPS/KGPDC family. HPS subfamily.

It catalyses the reaction 5,6,7,8-tetrahydromethanopterin + formaldehyde = 5,10-methylenetetrahydromethanopterin + H2O. It carries out the reaction D-ribulose 5-phosphate + formaldehyde = D-arabino-hex-3-ulose 6-phosphate. It functions in the pathway carbohydrate biosynthesis; D-ribose 5-phosphate biosynthesis. Functionally, catalyzes the condensation of formaldehyde with tetrahydromethanopterin (H(4)MPT) to 5,10-methylenetetrahydromethanopterin. Catalyzes the reversible formation of ribulose-5-phosphate and formaldehyde from 3-hexulose-6-phosphate. This chain is Bifunctional enzyme Fae/Hps, found in Methanoregula boonei (strain DSM 21154 / JCM 14090 / 6A8).